The following is a 321-amino-acid chain: Ribosomal protein L11 methyltransferase (321 aa).

S-adenosyl-L-methionine is bound by residues Thr-150, Gly-171, Asp-193, and Asn-256.

Belongs to the methyltransferase superfamily. PrmA family.

The protein localises to the cytoplasm. It catalyses the reaction L-lysyl-[protein] + 3 S-adenosyl-L-methionine = N(6),N(6),N(6)-trimethyl-L-lysyl-[protein] + 3 S-adenosyl-L-homocysteine + 3 H(+). Methylates ribosomal protein L11. This chain is Ribosomal protein L11 methyltransferase, found in Herpetosiphon aurantiacus (strain ATCC 23779 / DSM 785 / 114-95).